The primary structure comprises 203 residues: Imidazoleglycerol-phosphate dehydratase (203 aa).

It belongs to the imidazoleglycerol-phosphate dehydratase family.

It localises to the cytoplasm. It catalyses the reaction D-erythro-1-(imidazol-4-yl)glycerol 3-phosphate = 3-(imidazol-4-yl)-2-oxopropyl phosphate + H2O. It functions in the pathway amino-acid biosynthesis; L-histidine biosynthesis; L-histidine from 5-phospho-alpha-D-ribose 1-diphosphate: step 6/9. The polypeptide is Imidazoleglycerol-phosphate dehydratase (Helicobacter hepaticus (strain ATCC 51449 / 3B1)).